The following is a 740-amino-acid chain: Phosphoribosylformylglycinamidine synthase subunit PurL (740 aa).

Residue histidine 53 is part of the active site. ATP contacts are provided by tyrosine 56 and lysine 95. Glutamate 97 contributes to the Mg(2+) binding site. Substrate-binding positions include 98–101 (SHNH) and arginine 120. Histidine 99 acts as the Proton acceptor in catalysis. Aspartate 121 is a binding site for Mg(2+). Position 244 (glutamine 244) interacts with substrate. Aspartate 272 is a binding site for Mg(2+). 316–318 (ESQ) provides a ligand contact to substrate. Residues aspartate 497 and glycine 534 each coordinate ATP. Asparagine 535 contacts Mg(2+). Serine 537 contributes to the substrate binding site.

The protein belongs to the FGAMS family. In terms of assembly, monomer. Part of the FGAM synthase complex composed of 1 PurL, 1 PurQ and 2 PurS subunits.

It localises to the cytoplasm. The enzyme catalyses N(2)-formyl-N(1)-(5-phospho-beta-D-ribosyl)glycinamide + L-glutamine + ATP + H2O = 2-formamido-N(1)-(5-O-phospho-beta-D-ribosyl)acetamidine + L-glutamate + ADP + phosphate + H(+). It participates in purine metabolism; IMP biosynthesis via de novo pathway; 5-amino-1-(5-phospho-D-ribosyl)imidazole from N(2)-formyl-N(1)-(5-phospho-D-ribosyl)glycinamide: step 1/2. Its function is as follows. Part of the phosphoribosylformylglycinamidine synthase complex involved in the purines biosynthetic pathway. Catalyzes the ATP-dependent conversion of formylglycinamide ribonucleotide (FGAR) and glutamine to yield formylglycinamidine ribonucleotide (FGAM) and glutamate. The FGAM synthase complex is composed of three subunits. PurQ produces an ammonia molecule by converting glutamine to glutamate. PurL transfers the ammonia molecule to FGAR to form FGAM in an ATP-dependent manner. PurS interacts with PurQ and PurL and is thought to assist in the transfer of the ammonia molecule from PurQ to PurL. This chain is Phosphoribosylformylglycinamidine synthase subunit PurL, found in Rhodospirillum rubrum (strain ATCC 11170 / ATH 1.1.1 / DSM 467 / LMG 4362 / NCIMB 8255 / S1).